An 883-amino-acid chain; its full sequence is Putative pentatricopeptide repeat-containing protein At1g13800 (883 aa).

PPR repeat units lie at residues 145 to 180 (LIRVSTALVKAYANLDMFDEAIDIFFRAYYSLGRAP), 181 to 215 (DIKALNFLISRMIASGRSDMVVGFFWEIERLGLDA), 216 to 251 (DAHTYVLVVQALWRNDDKEELEKLLSRLLISETRNP), 253 to 285 (VFYLNFIEGLCLNQMTDIAYFLLQPLRDANILV), 290 to 324 (LGIAYRKVVRGLCYEMRIEDAESVVLDMEKHGIDP), 325 to 359 (DVYVYSAIIEGHRKNMNIPKAVDVFNKMLKKRKRI), 360 to 394 (NCVIVSSILQCYCQMGNFSEAYDLFKEFRETNISL), 395 to 429 (DRVCYNVAFDALGKLGKVEEAIELFREMTGKGIAP), 430 to 464 (DVINYTTLIGGCCLQGKCSDAFDLMIEMDGTGKTP), 465 to 499 (DIVIYNVLAGGLATNGLAQEAFETLKMMENRGVKP), 500 to 534 (TYVTHNMVIEGLIDAGELDKAEAFYESLEHKSREN), 537 to 561 (SMVKGFCAAGCLDHAFERFIRLEFP), 563 to 598 (PKSVYFTLFTSLCAEKDYISKAQDLLDRMWKLGVEP), 599 to 633 (EKSMYGKLIGAWCRVNNVRKAREFFEILVTKKIVP), 634 to 668 (DLFTYTIMINTYCRLNEPKQAYALFEDMKRRDVKP), 697 to 731 (DVVYYTIMINRYCHLNDLKKVYALFKDMKRREIVP), 760 to 794 (DVFYYTVLIDWQCKIGDLGEAKRIFDQMIESGVDP), 795 to 829 (DAAPYTALIACCCKMGYLKEAKMIFDRMIESGVKP), and 830 to 864 (DVVPYTALIAGCCRNGFVLKAVKLVKEMLEKGIKP).

Belongs to the PPR family. P subfamily.

This Arabidopsis thaliana (Mouse-ear cress) protein is Putative pentatricopeptide repeat-containing protein At1g13800.